Consider the following 785-residue polypeptide: Endonuclease MutS2 (785 aa).

331–338 provides a ligand contact to ATP; that stretch reads GPNTGGKT. The 76-residue stretch at 710–785 folds into the Smr domain; the sequence is LDLRGLYADE…GLGVTVVELA (76 aa).

It belongs to the DNA mismatch repair MutS family. MutS2 subfamily. As to quaternary structure, homodimer. Binds to stalled ribosomes, contacting rRNA.

Its function is as follows. Endonuclease that is involved in the suppression of homologous recombination and thus may have a key role in the control of bacterial genetic diversity. In terms of biological role, acts as a ribosome collision sensor, splitting the ribosome into its 2 subunits. Detects stalled/collided 70S ribosomes which it binds and splits by an ATP-hydrolysis driven conformational change. Acts upstream of the ribosome quality control system (RQC), a ribosome-associated complex that mediates the extraction of incompletely synthesized nascent chains from stalled ribosomes and their subsequent degradation. Probably generates substrates for RQC. The polypeptide is Endonuclease MutS2 (Pelotomaculum thermopropionicum (strain DSM 13744 / JCM 10971 / SI)).